The sequence spans 517 residues: MNALNYLKHRFLFSKDKFWYAPFKQKQRRSIYSTFSLIVLSFIVSFFLIVAIPGIKGGTFLEIFTRLFKDRINIENFARQIAIYTLAALAFSFCMSVGVFNIGISGQMMAGANFGFMMILKVFPESFRPAFGGQIITILLMILGSVTVAMVVAALKVFFKVNEVVSAIMLNWVIVLVSAYLVGTYIKPEKTDTSQFYSIELPDAFALYNFSDVQQKYGWLTSLVIAIAAAIFIAVLMKFTVFGHKLKSTGLSVTGSQAAGYSVKKYQFLSFVISGILSGLLAAVVYTASFEKQLTFSDVGDFGITSVPITGFDGIAIGLIALNSPARIVIVSTIISFVTIGAKPAGLNAATASLVLGIMMYFAAIYNLMIYIKPWRMIVKLNISKMNEAAYDEFQNEMAANLETLSFQRFLDKQKRKHDKERMVWFDTKRFEEYQKKKQATLQTFHENSSQNLLQYWKQQLLVADVKRLTFKWDFLTFKHQQKYILRWYKGKNKKQTALENEFASLNEAISQKLEEK.

Transmembrane regions (helical) follow at residues 35–55 (FSLIVLSFIVSFFLIVAIPGI), 81–101 (IAIYTLAALAFSFCMSVGVFN), 102–122 (IGISGQMMAGANFGFMMILKV), 135–155 (IITILLMILGSVTVAMVVAAL), 164–184 (VVSAIMLNWVIVLVSAYLVGT), 223–243 (LVIAIAAAIFIAVLMKFTVFG), 268–288 (FLSFVISGILSGLLAAVVYTA), 302–322 (FGITSVPITGFDGIAIGLIAL), 328–348 (IVIVSTIISFVTIGAKPAGLN), and 352–372 (ASLVLGIMMYFAAIYNLMIYI).

It is found in the cell membrane. This is an uncharacterized protein from Mycoplasma pneumoniae (strain ATCC 29342 / M129 / Subtype 1) (Mycoplasmoides pneumoniae).